We begin with the raw amino-acid sequence, 495 residues long: MATFKDACFHYRRLTALNRRLCNIGANSIWMPVPDAKIKGWCLECCQIADLTHCYGCSLPHVCKWCVQNRRCFLDNEPHLLKLQQLKHPITKDKLQCIIDLYNIIFPINDKVIRKFERMIKQRECRNQYKIEWYNHKLLPITLNAAAFKFDENNLYYVFGLYEKSVSDIYAPYRIVNFINEFDKLLLDHINFTRMSNLPIELRAITQEYFQLSRLPSSKLKQIYFSDFTKETVIFNTYTKTPGRSIYRNVTEFNWRDELELYTDLKNDKNKLIAAMMTSKYTRFYAHDNNFGRLKMTIFELGHHCQPNYVASNHPGNASDIQYCKWCNIKYFLSKIDWRIRDMYNLLMEFIKDCYKSNVNVGHCSSVENIYPLIKRLIWSLFTNHMDQTIEEVFNHMSPVSVEGTNVIMLILGLNISLYNEIKRTLNVDSIPMVLNLNEFSSIVKSISSKWYNVDELDKLPMSIKSTEELIEMKNSGTLTEEFELLISNSEDDNE.

The tract at residues 1–81 (MATFKDACFH…CFLDNEPHLL (81 aa)) is RNA-binding. The interval 42–79 (CLECCQIADLTHCYGCSLPHVCKWCVQNRRCFLDNEPH) is zinc-binding domain. An important for cytoskeleton localization region spans residues 82-177 (KLQQLKHPIT…DIYAPYRIVN (96 aa)). The segment at 320–495 (DIQYCKWCNI…LISNSEDDNE (176 aa)) is interaction with host IRF3. Residues 485-488 (LLIS) carry the pLxIS motif motif.

The protein belongs to the rotavirus NSP1 family. As to quaternary structure, interacts (via C-terminus) with host IRF3; this interaction leads to IRF3 degradation. Interacts with host IRF7; this interaction leads to IRF7 degradation. Interacts with host CUL1 and CUL3.

It is found in the host cytoplasm. The protein localises to the host cytoskeleton. Functionally, plays a role in the inhibition of host innate immunity by inducing the degradation of key host factors required to activate interferon production such as IRF3, IRF5 or IRF7. Associates with components of cullin RING ligases (CRLs) including CUL1 or CUL3, which are essential multisubunit ubiquitination complexes, to modulate their activities. This Macaca mulatta (Rhesus macaque) protein is Non-structural protein 1.